Consider the following 1157-residue polypeptide: ATP-dependent helicase/deoxyribonuclease subunit B (1157 aa).

Positions 1 to 275 constitute a UvrD-like helicase ATP-binding domain; sequence MTLHAYLGRA…QYFNQLYRFN (275 aa). 8-15 is an ATP binding site; that stretch reads GRAGTGKS. The 315-residue stretch at 269 to 583 folds into the UvrD-like helicase C-terminal domain; that stretch reads NQLYRFNNQD…SIGTMDLAKV (315 aa). 4 residues coordinate [4Fe-4S] cluster: cysteine 784, cysteine 1112, cysteine 1115, and cysteine 1121.

This sequence belongs to the helicase family. AddB/RexB type 1 subfamily. Heterodimer of AddA and AddB. The cofactor is Mg(2+). Requires [4Fe-4S] cluster as cofactor.

In terms of biological role, the heterodimer acts as both an ATP-dependent DNA helicase and an ATP-dependent, dual-direction single-stranded exonuclease. Recognizes the chi site generating a DNA molecule suitable for the initiation of homologous recombination. The AddB subunit has 5' -&gt; 3' nuclease activity but not helicase activity. The sequence is that of ATP-dependent helicase/deoxyribonuclease subunit B from Staphylococcus aureus (strain JH9).